Consider the following 164-residue polypeptide: Interferon gamma (164 aa).

An N-terminal signal peptide occupies residues 1 to 19; that stretch reads MTCQTYNLFVLSVIMIYYG. Asparagine 42 and asparagine 61 each carry an N-linked (GlcNAc...) asparagine glycan.

It belongs to the type II (or gamma) interferon family. In terms of assembly, homodimer.

The protein localises to the secreted. Its function is as follows. Produced by lymphocytes activated by specific antigens or mitogens. IFN-gamma, in addition to having antiviral activity, has important immunoregulatory functions. It is a potent activator of macrophages, it has antiproliferative effects on transformed cells and it can potentiate the antiviral and antitumor effects of the type I interferons. This chain is Interferon gamma (IFNG), found in Meleagris gallopavo (Wild turkey).